Reading from the N-terminus, the 920-residue chain is Chitin synthase C (920 aa).

Disordered stretches follow at residues Met-1–Gln-41 and Ile-140–Pro-173. Residues Tyr-154–Gln-163 are compositionally biased toward acidic residues. 5 consecutive transmembrane segments (helical) span residues Ser-466 to Leu-486, Arg-564 to Trp-584, Leu-608 to Leu-628, Val-640 to Ala-660, and Met-675 to Val-695. N-linked (GlcNAc...) asparagine glycosylation is present at Asn-715. Transmembrane regions (helical) follow at residues Phe-718–Ile-738, Phe-749–Cys-769, Ala-847–Ala-867, and Val-892–Leu-912.

This sequence belongs to the chitin synthase family. Class I subfamily.

It localises to the cell membrane. The enzyme catalyses [(1-&gt;4)-N-acetyl-beta-D-glucosaminyl](n) + UDP-N-acetyl-alpha-D-glucosamine = [(1-&gt;4)-N-acetyl-beta-D-glucosaminyl](n+1) + UDP + H(+). Polymerizes chitin, a structural polymer of the cell wall and septum, by transferring the sugar moiety of UDP-GlcNAc to the non-reducing end of the growing chitin polymer. Involved in hyphal growth. The protein is Chitin synthase C of Aspergillus oryzae (strain ATCC 42149 / RIB 40) (Yellow koji mold).